Consider the following 195-residue polypeptide: Protein GrpE (195 aa).

The protein belongs to the GrpE family. Homodimer.

The protein resides in the cytoplasm. In terms of biological role, participates actively in the response to hyperosmotic and heat shock by preventing the aggregation of stress-denatured proteins, in association with DnaK and GrpE. It is the nucleotide exchange factor for DnaK and may function as a thermosensor. Unfolded proteins bind initially to DnaJ; upon interaction with the DnaJ-bound protein, DnaK hydrolyzes its bound ATP, resulting in the formation of a stable complex. GrpE releases ADP from DnaK; ATP binding to DnaK triggers the release of the substrate protein, thus completing the reaction cycle. Several rounds of ATP-dependent interactions between DnaJ, DnaK and GrpE are required for fully efficient folding. The sequence is that of Protein GrpE from Francisella tularensis subsp. novicida (strain U112).